Here is a 340-residue protein sequence, read N- to C-terminus: Ephrin-B3 (340 aa).

The first 27 residues, 1 to 27, serve as a signal peptide directing secretion; that stretch reads MGAPHFGPGGVQVGALLLLGFAGLVSG. Residues 28-167 form the Ephrin RBD domain; the sequence is LSLEPVYWNS…TRGMKVLLRV (140 aa). Topologically, residues 28–227 are extracellular; that stretch reads LSLEPVYWNS…GPLPPPSMPA (200 aa). 2 disulfide bridges follow: Cys62-Cys104 and Cys92-Cys156. Positions 168 to 227 are disordered; it reads GQSPRGGAVPRKPVSEMPMERDRGAAHSAEPGRDTIPGDPSSNATSRGAEGPLPPPSMPA. Positions 185–200 are enriched in basic and acidic residues; that stretch reads PMERDRGAAHSAEPGR. Asn210 is a glycosylation site (N-linked (GlcNAc...) asparagine). A helical transmembrane segment spans residues 228-248; sequence VAGAAGGMALLLLGVAGAGGA. Residues 249–340 lie on the Cytoplasmic side of the membrane; it reads MCWRRRRAKP…QSPPNIYYKV (92 aa). A disordered region spans residues 254–300; that stretch reads RRAKPSESRHPGPGSFGRGGSLGLGGGGGMGPREAEPGELGIALRGG. A compositionally biased stretch (gly residues) spans 267–284; sequence GSFGRGGSLGLGGGGGMG. Arg271 carries the post-translational modification Omega-N-methylarginine. Ser274 is subject to Phosphoserine. The short motif at 338–340 is the PDZ-binding element; sequence YKV.

This sequence belongs to the ephrin family. In terms of assembly, interacts with GRIP1 and GRIP2. Expressed on lateral floor plate cells, specifically on commissural axon segments that have passed through the floor plate. Expressed in cells of the retinal ganglion cell layer during retinal axon guidance to the optic disk. Expressed in myogenic progenitor cells.

The protein localises to the membrane. Its function is as follows. Cell surface transmembrane ligand for Eph receptors, a family of receptor tyrosine kinases which are crucial for migration, repulsion and adhesion during neuronal, vascular and epithelial development. Binds promiscuously Eph receptors residing on adjacent cells, leading to contact-dependent bidirectional signaling into neighboring cells. The signaling pathway downstream of the receptor is referred to as forward signaling while the signaling pathway downstream of the ephrin ligand is referred to as reverse signaling. May play a pivotal role in forebrain function. Binds to, and induce the collapse of, commissural axons/growth cones in vitro. May play a role in constraining the orientation of longitudinally projecting axons. The protein is Ephrin-B3 (Efnb3) of Mus musculus (Mouse).